The sequence spans 501 residues: Na(+)/H(+) antiporter NhaB (501 aa).

The next 11 helical transmembrane spans lie at 24 to 44, 46 to 66, 90 to 110, 145 to 165, 206 to 226, 239 to 259, 302 to 319, 351 to 371, 395 to 415, 450 to 470, and 478 to 498; these read VILLFLVINPIVMYLLGPGVA, WLLIGEFIFTLAMALKCYPLL, VLTNFPVILLLMFMVAGIYFM, FLDALTVTAVIISVAVGFFSV, LLMHGAIGTALGGVATMVGEP, FAGFFLHMAPVSIPVLFAGLA, ALWIQAVAAVILVFGLAF, FQESLPFTSLLVVFFAVVAVI, MFFIANGLLSMISDNVFVATV, VATPNGQAAFLFLLTSAIAPL, and MVIMALPYTIVMGGVGLYMVT.

This sequence belongs to the NhaB Na(+)/H(+) (TC 2.A.34) antiporter family.

It localises to the cell inner membrane. It carries out the reaction 2 Na(+)(in) + 3 H(+)(out) = 2 Na(+)(out) + 3 H(+)(in). Its function is as follows. Na(+)/H(+) antiporter that extrudes sodium in exchange for external protons. This chain is Na(+)/H(+) antiporter NhaB, found in Marinobacter nauticus (strain ATCC 700491 / DSM 11845 / VT8) (Marinobacter aquaeolei).